The chain runs to 717 residues: Ribosomal RNA large subunit methyltransferase K/L (717 aa).

Residues 44–155 (DAYKVCIYSY…KQFVNVFLCL (112 aa)) form the THUMP domain.

The protein belongs to the methyltransferase superfamily. RlmKL family.

It localises to the cytoplasm. The catalysed reaction is guanosine(2445) in 23S rRNA + S-adenosyl-L-methionine = N(2)-methylguanosine(2445) in 23S rRNA + S-adenosyl-L-homocysteine + H(+). It carries out the reaction guanosine(2069) in 23S rRNA + S-adenosyl-L-methionine = N(2)-methylguanosine(2069) in 23S rRNA + S-adenosyl-L-homocysteine + H(+). Its function is as follows. Specifically methylates the guanine in position 2445 (m2G2445) and the guanine in position 2069 (m7G2069) of 23S rRNA. This is Ribosomal RNA large subunit methyltransferase K/L from Francisella tularensis subsp. holarctica (strain FTNF002-00 / FTA).